Reading from the N-terminus, the 528-residue chain is Tyrosine--tRNA ligase, cytoplasmic (528 aa).

Residue Tyr39 coordinates L-tyrosine. Positions 44–52 (TTGKPHVAY) match the 'HIGH' region motif. L-tyrosine is bound by residues Tyr166, Gln170, Asp173, and Gln188. The short motif at 222–226 (KMSSS) is the 'KMSKS' region element. Positions 242 to 247 (KKKLKK) match the Nuclear localization signal motif. The interval 335 to 364 (KLSNDAYPGASKQKTVPKGSTKNSGPEEID) is disordered. Over residues 346–358 (KQKTVPKGSTKNS) the composition is skewed to polar residues. Positions 364 to 468 (DPSLLDLRVG…TGSAPGERIY (105 aa)) constitute a tRNA-binding domain.

Belongs to the class-I aminoacyl-tRNA synthetase family. As to quaternary structure, homodimer.

The protein resides in the cytoplasm. The protein localises to the nucleus. The enzyme catalyses tRNA(Tyr) + L-tyrosine + ATP = L-tyrosyl-tRNA(Tyr) + AMP + diphosphate + H(+). In terms of biological role, catalyzes the attachment of tyrosine to tRNA(Tyr) in a two-step reaction: tyrosine is first activated by ATP to form Tyr-AMP and then transferred to the acceptor end of tRNA(Tyr). In Xenopus tropicalis (Western clawed frog), this protein is Tyrosine--tRNA ligase, cytoplasmic (yars1).